We begin with the raw amino-acid sequence, 315 residues long: MACAEFSFHVPSLEELAGVMQKGLKDNFADVQVSVVDCPDLTKEPFTFPVKGICGKTRIAEVGGVPYLLPLVNQKKVYDLNKIAKEIKLPGAFILGAGAGPFQTLGFNSEFMPVIQTESEHKPPVNGSYFAHVNPADGGCLLEKYSEKCHDFQCALLANLFASEGQPGKVIEVKAKRRTGPLNFVTCMRETLEKHYGNKPIGMGGTFIIQKGKVKSHIMPAEFSSCPLNSDEEVNKWLHFYEMKAPLVCLPVFVSRDPGFDLRLEHTHFFSRHGEGGHYHYDTTPDIVEYLGYFLPAEFLYRIDQPKETHSIGRD.

3 residues coordinate Zn(2+): His266, His268, and His278.

Monomer. Requires Zn(2+) as cofactor.

Its subcellular location is the nucleus. It localises to the cytoplasm. Exhibits ester hydrolase activity on the substrate p-nitrophenyl acetate, in vitro. Regulates DNA damage and repair by regulating HIF1A degradation via chaperone-mediated autophagy (CMA). Its function is as follows. Probably non-functional. The polypeptide is Ester hydrolase C11orf54 (C11orf54) (Homo sapiens (Human)).